The following is a 302-amino-acid chain: Glycine--tRNA ligase alpha subunit (302 aa).

It belongs to the class-II aminoacyl-tRNA synthetase family. Tetramer of two alpha and two beta subunits.

The protein localises to the cytoplasm. The enzyme catalyses tRNA(Gly) + glycine + ATP = glycyl-tRNA(Gly) + AMP + diphosphate. The chain is Glycine--tRNA ligase alpha subunit from Xanthomonas axonopodis pv. citri (strain 306).